Consider the following 126-residue polypeptide: Glycine cleavage system H protein (126 aa).

A Lipoyl-binding domain is found at 24–106 (TITVGITDHA…YGEGWFFRMK (83 aa)). Residue K65 is modified to N6-lipoyllysine.

The protein belongs to the GcvH family. The glycine cleavage system is composed of four proteins: P, T, L and H. The cofactor is (R)-lipoate.

The glycine cleavage system catalyzes the degradation of glycine. The H protein shuttles the methylamine group of glycine from the P protein to the T protein. In Psychrobacter arcticus (strain DSM 17307 / VKM B-2377 / 273-4), this protein is Glycine cleavage system H protein.